We begin with the raw amino-acid sequence, 173 residues long: Small ribosomal subunit protein uS5 (173 aa).

Residues 17 to 80 (LREKMIAVNR…EESRRNMIKV (64 aa)) enclose the S5 DRBM domain.

The protein belongs to the universal ribosomal protein uS5 family. Part of the 30S ribosomal subunit. Contacts proteins S4 and S8.

In terms of biological role, with S4 and S12 plays an important role in translational accuracy. Located at the back of the 30S subunit body where it stabilizes the conformation of the head with respect to the body. The chain is Small ribosomal subunit protein uS5 from Delftia acidovorans (strain DSM 14801 / SPH-1).